A 311-amino-acid chain; its full sequence is Transcription factor bHLH145 (311 aa).

Positions 253 to 302 constitute a bHLH domain; sequence FLKRSKLSSNKIGEEKIFETVSLLRSVVPGEELVDPILVIDRAIDYLKSL.

In terms of assembly, homodimer.

It is found in the nucleus. The chain is Transcription factor bHLH145 (BHLH145) from Arabidopsis thaliana (Mouse-ear cress).